The sequence spans 235 residues: Aspartate/glutamate leucyltransferase (235 aa).

It belongs to the R-transferase family. Bpt subfamily.

The protein localises to the cytoplasm. It carries out the reaction N-terminal L-glutamyl-[protein] + L-leucyl-tRNA(Leu) = N-terminal L-leucyl-L-glutamyl-[protein] + tRNA(Leu) + H(+). The catalysed reaction is N-terminal L-aspartyl-[protein] + L-leucyl-tRNA(Leu) = N-terminal L-leucyl-L-aspartyl-[protein] + tRNA(Leu) + H(+). In terms of biological role, functions in the N-end rule pathway of protein degradation where it conjugates Leu from its aminoacyl-tRNA to the N-termini of proteins containing an N-terminal aspartate or glutamate. This Pseudomonas fluorescens (strain ATCC BAA-477 / NRRL B-23932 / Pf-5) protein is Aspartate/glutamate leucyltransferase.